The sequence spans 332 residues: Glycerol-3-phosphate dehydrogenase [NAD(P)+] (332 aa).

3 residues coordinate NADPH: Trp-11, Arg-30, and Lys-108. The sn-glycerol 3-phosphate site is built by Lys-108, Gly-137, and Ser-139. Ala-141 lines the NADPH pocket. Lys-192, Asp-245, Ser-255, Arg-256, and Asn-257 together coordinate sn-glycerol 3-phosphate. Lys-192 serves as the catalytic Proton acceptor. Arg-256 contacts NADPH. The NADPH site is built by Val-280 and Glu-282.

This sequence belongs to the NAD-dependent glycerol-3-phosphate dehydrogenase family.

It localises to the cytoplasm. It carries out the reaction sn-glycerol 3-phosphate + NAD(+) = dihydroxyacetone phosphate + NADH + H(+). The enzyme catalyses sn-glycerol 3-phosphate + NADP(+) = dihydroxyacetone phosphate + NADPH + H(+). Its pathway is membrane lipid metabolism; glycerophospholipid metabolism. Catalyzes the reduction of the glycolytic intermediate dihydroxyacetone phosphate (DHAP) to sn-glycerol 3-phosphate (G3P), the key precursor for phospholipid synthesis. The sequence is that of Glycerol-3-phosphate dehydrogenase [NAD(P)+] from Burkholderia pseudomallei (strain 1710b).